We begin with the raw amino-acid sequence, 176 residues long: Large ribosomal subunit protein uL10 (176 aa).

The protein belongs to the universal ribosomal protein uL10 family. In terms of assembly, part of the ribosomal stalk of the 50S ribosomal subunit. The N-terminus interacts with L11 and the large rRNA to form the base of the stalk. The C-terminus forms an elongated spine to which L12 dimers bind in a sequential fashion forming a multimeric L10(L12)X complex.

Functionally, forms part of the ribosomal stalk, playing a central role in the interaction of the ribosome with GTP-bound translation factors. The chain is Large ribosomal subunit protein uL10 from Saccharophagus degradans (strain 2-40 / ATCC 43961 / DSM 17024).